Reading from the N-terminus, the 137-residue chain is ATP synthase epsilon chain (137 aa).

This sequence belongs to the ATPase epsilon chain family. As to quaternary structure, F-type ATPases have 2 components, CF(1) - the catalytic core - and CF(0) - the membrane proton channel. CF(1) has five subunits: alpha(3), beta(3), gamma(1), delta(1), epsilon(1). CF(0) has three main subunits: a, b and c.

The protein localises to the cell membrane. Produces ATP from ADP in the presence of a proton gradient across the membrane. The chain is ATP synthase epsilon chain from Streptococcus agalactiae serotype III (strain NEM316).